A 187-amino-acid polypeptide reads, in one-letter code: Peptidyl-tRNA hydrolase (187 aa).

Tyr-18 contributes to the tRNA binding site. Residue His-23 is the Proton acceptor of the active site. TRNA is bound by residues Phe-65, Asn-67, and Asn-113.

It belongs to the PTH family. As to quaternary structure, monomer.

The protein localises to the cytoplasm. The catalysed reaction is an N-acyl-L-alpha-aminoacyl-tRNA + H2O = an N-acyl-L-amino acid + a tRNA + H(+). Hydrolyzes ribosome-free peptidyl-tRNAs (with 1 or more amino acids incorporated), which drop off the ribosome during protein synthesis, or as a result of ribosome stalling. Functionally, catalyzes the release of premature peptidyl moieties from peptidyl-tRNA molecules trapped in stalled 50S ribosomal subunits, and thus maintains levels of free tRNAs and 50S ribosomes. The protein is Peptidyl-tRNA hydrolase of Coxiella burnetii (strain CbuG_Q212) (Coxiella burnetii (strain Q212)).